The chain runs to 226 residues: Enolase-phosphatase E1 (226 aa).

The protein belongs to the HAD-like hydrolase superfamily. MasA/MtnC family. As to quaternary structure, monomer. Requires Mg(2+) as cofactor.

It catalyses the reaction 5-methylsulfanyl-2,3-dioxopentyl phosphate + H2O = 1,2-dihydroxy-5-(methylsulfanyl)pent-1-en-3-one + phosphate. It participates in amino-acid biosynthesis; L-methionine biosynthesis via salvage pathway; L-methionine from S-methyl-5-thio-alpha-D-ribose 1-phosphate: step 3/6. The protein operates within amino-acid biosynthesis; L-methionine biosynthesis via salvage pathway; L-methionine from S-methyl-5-thio-alpha-D-ribose 1-phosphate: step 4/6. In terms of biological role, bifunctional enzyme that catalyzes the enolization of 2,3-diketo-5-methylthiopentyl-1-phosphate (DK-MTP-1-P) into the intermediate 2-hydroxy-3-keto-5-methylthiopentenyl-1-phosphate (HK-MTPenyl-1-P), which is then dephosphorylated to form the acireductone 1,2-dihydroxy-3-keto-5-methylthiopentene (DHK-MTPene). This chain is Enolase-phosphatase E1, found in Shewanella sp. (strain MR-4).